Reading from the N-terminus, the 138-residue chain is Protein NrdI (138 aa).

The protein belongs to the NrdI family.

Its function is as follows. Probably involved in ribonucleotide reductase function. In Mycobacterium leprae (strain TN), this protein is Protein NrdI.